Consider the following 364-residue polypeptide: MKLNKIYLLSFRNLEKIELTPAHRFNIFYGKNAQGKTNLLESIFLLGTMKSFKMAKNSEMVRWGSDQSLIKGWVERDGVTREIALFIDKQGKKIKLDRKSVTKVDEFFGNLNVVVFTPEEINMVRGVPDLRRKYLDRAVFSSDVTYLHAYHDYCKILKNRNILLKSGEKSGLDVWTEKLAEYGRKVINKRLDYLHEIQELLSKFYNDISGTEEVVEIRYRPHLMDMENYEKDNCGALSEALVKCAAEEQRRGTTLVGPHRDDIDFVLNGRALKQFGSQGQQRSYVLALKMSEIDCLHQKFDSPPILLLDDMTSELDQDRNRNLMEFLKKKEMQVFITTTSLQNISLEGIENHRTFLVSEGKVLH.

30–37 provides a ligand contact to ATP; the sequence is GKNAQGKT.

This sequence belongs to the RecF family.

The protein resides in the cytoplasm. The RecF protein is involved in DNA metabolism; it is required for DNA replication and normal SOS inducibility. RecF binds preferentially to single-stranded, linear DNA. It also seems to bind ATP. This is DNA replication and repair protein RecF from Geotalea uraniireducens (strain Rf4) (Geobacter uraniireducens).